We begin with the raw amino-acid sequence, 393 residues long: Elongation factor Tu (393 aa).

The region spanning K10–V203 is the tr-type G domain. The tract at residues G19–T26 is G1. Residue G19–T26 participates in GTP binding. Residue T26 coordinates Mg(2+). Residues G60–S64 are G2. Residues D81–G84 form a G3 region. GTP-binding positions include D81 to H85 and N136 to D139. A G4 region spans residues N136–D139. The segment at S173–L175 is G5.

Belongs to the TRAFAC class translation factor GTPase superfamily. Classic translation factor GTPase family. EF-Tu/EF-1A subfamily. In terms of assembly, monomer.

Its subcellular location is the cytoplasm. It catalyses the reaction GTP + H2O = GDP + phosphate + H(+). GTP hydrolase that promotes the GTP-dependent binding of aminoacyl-tRNA to the A-site of ribosomes during protein biosynthesis. The protein is Elongation factor Tu of Chlorobium phaeobacteroides (strain BS1).